We begin with the raw amino-acid sequence, 513 residues long: MTLSPTTMAAVRASGAVPKSEYLLTAEGVRKEFPGVVALDDVEFKLKRGTVHALMGENGAGKSTLMKILAGIYYPDQGEVKLRGAGIRLKSPLDALENGIAMIHQELNLMPFMTVAENIWIRREPKNRFGFVDHGEMRRMTAKLFERLKIDLDPEIEVRHLSVANRQMVEIAKAVSYESDVLIMDEPTSALTEREVAHLFEIIRDLRSQGIGIVYITHKMNELFEIADEFSVFRDGKYIGTHLSNEVTRDDIIRMMVGREITQMFPKEEVPIGDVVLSVKNLTLNGVFRDVSFDVRAGEILGVAGLVGSGRSNVAETLFGVTPASSGTIAIDGKEVVIDSANKAIRHRMAFLTEDRKDTGCLLILDILENMQIAVLQDKFVKRGFVSEREVTAACEEMSRKLRVKTPNLQERVENLSGGNQQKVLIGRWLLTNPRILILDEPTRGIDVGAKAEIHRLVTELARNGVAVIMISSEMPEVLGMSDRIMVMHEGRVTGILDRAEATQIKVMELAAR.

2 consecutive ABC transporter domains span residues 24-260 (LTAE…VGRE) and 270-510 (VPIG…VMEL). An ATP-binding site is contributed by 56–63 (GENGAGKS).

This sequence belongs to the ABC transporter superfamily. Carbohydrate importer 2 (CUT2) (TC 3.A.1.2) family.

The protein resides in the cell inner membrane. It carries out the reaction D-ribose(out) + ATP + H2O = D-ribose(in) + ADP + phosphate + H(+). The enzyme catalyses D-galactose(out) + ATP + H2O = D-galactose(in) + ADP + phosphate + H(+). In terms of biological role, part of an ABC transporter complex involved in carbohydrate import. Could be involved in ribose, galactose and/or methyl galactoside import. Responsible for energy coupling to the transport system. The protein is Putative ribose/galactose/methyl galactoside import ATP-binding protein 2 of Rhizobium meliloti (strain 1021) (Ensifer meliloti).